The following is a 128-amino-acid chain: Aspartate 1-decarboxylase (128 aa).

The active-site Schiff-base intermediate with substrate; via pyruvic acid is the Ser-25. Ser-25 is subject to Pyruvic acid (Ser). Thr-57 provides a ligand contact to substrate. Catalysis depends on Tyr-58, which acts as the Proton donor. 73–75 provides a ligand contact to substrate; the sequence is GAA.

This sequence belongs to the PanD family. In terms of assembly, heterooctamer of four alpha and four beta subunits. Pyruvate serves as cofactor. Post-translationally, is synthesized initially as an inactive proenzyme, which is activated by self-cleavage at a specific serine bond to produce a beta-subunit with a hydroxyl group at its C-terminus and an alpha-subunit with a pyruvoyl group at its N-terminus.

It is found in the cytoplasm. The enzyme catalyses L-aspartate + H(+) = beta-alanine + CO2. The protein operates within cofactor biosynthesis; (R)-pantothenate biosynthesis; beta-alanine from L-aspartate: step 1/1. Its function is as follows. Catalyzes the pyruvoyl-dependent decarboxylation of aspartate to produce beta-alanine. In Staphylococcus epidermidis (strain ATCC 35984 / DSM 28319 / BCRC 17069 / CCUG 31568 / BM 3577 / RP62A), this protein is Aspartate 1-decarboxylase.